The primary structure comprises 489 residues: Mitochondrial-processing peptidase subunit beta (489 aa).

Residues 1 to 43 (MAAAAARVVLSSAARRRLWGFSESLLIRGAAGRSLYFGENRLR) constitute a mitochondrion transit peptide. Position 101 (His-101) interacts with Zn(2+). Glu-104 functions as the Proton acceptor in the catalytic mechanism. His-105 and Glu-181 together coordinate Zn(2+).

Belongs to the peptidase M16 family. In terms of assembly, heterodimer of PMPCA (alpha) and PMPCB (beta) subunits, forming the mitochondrial processing protease (MPP) in which PMPCA is involved in substrate recognition and binding and PMPCB is the catalytic subunit. The cofactor is Zn(2+).

It localises to the mitochondrion matrix. The catalysed reaction is Release of N-terminal transit peptides from precursor proteins imported into the mitochondrion, typically with Arg in position P2.. With respect to regulation, binding to PMPCA is required for catalytic activity. Its function is as follows. Catalytic subunit of the essential mitochondrial processing protease (MPP), which cleaves the mitochondrial sequence off newly imported precursors proteins. Preferentially, cleaves after an arginine at position P2. Required for PINK1 turnover by coupling PINK1 mitochondrial import and cleavage, which results in subsequent PINK1 proteolysis. This is Mitochondrial-processing peptidase subunit beta (PMPCB) from Homo sapiens (Human).